The chain runs to 476 residues: 3-isopropylmalate dehydratase large subunit (476 aa).

Residues C353, C413, and C416 each contribute to the [4Fe-4S] cluster site.

Belongs to the aconitase/IPM isomerase family. LeuC type 1 subfamily. Heterodimer of LeuC and LeuD. Requires [4Fe-4S] cluster as cofactor.

The enzyme catalyses (2R,3S)-3-isopropylmalate = (2S)-2-isopropylmalate. It functions in the pathway amino-acid biosynthesis; L-leucine biosynthesis; L-leucine from 3-methyl-2-oxobutanoate: step 2/4. Functionally, catalyzes the isomerization between 2-isopropylmalate and 3-isopropylmalate, via the formation of 2-isopropylmaleate. The sequence is that of 3-isopropylmalate dehydratase large subunit from Yersinia enterocolitica serotype O:8 / biotype 1B (strain NCTC 13174 / 8081).